The sequence spans 169 residues: Lipoprotein signal peptidase (169 aa).

4 helical membrane passes run 10–30 (LPWLWITVLVFVLDQLSKAFF), 40–60 (IVVIPDLFSWTLAYNTGAAFS), 68–88 (WQRWLFALIAIVVSAILVVWL), and 94–114 (GETWLAIALALVLGGALGNLY). Active-site residues include Asp124 and Asp143. A helical membrane pass occupies residues 135–155 (YFPAFNLADSAITVGAVMLAL).

The protein belongs to the peptidase A8 family.

Its subcellular location is the cell inner membrane. It carries out the reaction Release of signal peptides from bacterial membrane prolipoproteins. Hydrolyzes -Xaa-Yaa-Zaa-|-(S,diacylglyceryl)Cys-, in which Xaa is hydrophobic (preferably Leu), and Yaa (Ala or Ser) and Zaa (Gly or Ala) have small, neutral side chains.. It functions in the pathway protein modification; lipoprotein biosynthesis (signal peptide cleavage). In terms of biological role, this protein specifically catalyzes the removal of signal peptides from prolipoproteins. This chain is Lipoprotein signal peptidase, found in Pseudomonas aeruginosa (strain UCBPP-PA14).